The sequence spans 628 residues: Very-long-chain aldehyde decarbonylase GL1-2 (628 aa).

A run of 5 helical transmembrane segments spans residues 37–57 (GAAP…ARGL), 131–151 (GWAI…YWAH), 191–211 (VVIG…VGLV), 299–319 (DFVF…PFVL), and 331–351 (FVLL…WCCS). The Fatty acid hydroxylase domain maps to 137-277 (LLHVLVAEPL…MPIFDLLGGT (141 aa)).

Belongs to the sterol desaturase family. In terms of assembly, homodimer. Expressed in germinating seeds, radicals and leaves.

The protein resides in the endoplasmic reticulum membrane. It carries out the reaction a long-chain fatty aldehyde + 2 NADPH + O2 + H(+) = a long-chain alkane + formate + 2 NADP(+) + H2O. Aldehyde decarbonylase involved in the conversion of aldehydes to alkanes. Core component of a very-long-chain alkane synthesis complex. Required for the formation of wax layers conferring cuticular permeability and drought tolerance. This chain is Very-long-chain aldehyde decarbonylase GL1-2, found in Oryza sativa subsp. japonica (Rice).